Consider the following 332-residue polypeptide: Eukaryotic translation initiation factor 3 subunit I (332 aa).

WD repeat units lie at residues 8–47 (GHER…GTYH), 48–87 (GHQG…LLHT), 144–182 (DESK…LLSS), and 279–318 (GHFG…FDFM).

Belongs to the eIF-3 subunit I family. As to quaternary structure, component of the eukaryotic translation initiation factor 3 (eIF-3) complex.

It localises to the cytoplasm. Component of the eukaryotic translation initiation factor 3 (eIF-3) complex, which is involved in protein synthesis of a specialized repertoire of mRNAs and, together with other initiation factors, stimulates binding of mRNA and methionyl-tRNAi to the 40S ribosome. The eIF-3 complex specifically targets and initiates translation of a subset of mRNAs involved in cell proliferation. This chain is Eukaryotic translation initiation factor 3 subunit I, found in Phaeosphaeria nodorum (strain SN15 / ATCC MYA-4574 / FGSC 10173) (Glume blotch fungus).